A 533-amino-acid polypeptide reads, in one-letter code: Lysine--tRNA ligase (533 aa).

Positions 28–36 match the 'HIGH' region motif; that stretch reads PSGHIHIGN. A 'KMSKS' region motif is present at residues 278–282; it reads PMSSS.

Belongs to the class-I aminoacyl-tRNA synthetase family.

It localises to the cytoplasm. The catalysed reaction is tRNA(Lys) + L-lysine + ATP = L-lysyl-tRNA(Lys) + AMP + diphosphate. This Methanococcus maripaludis (strain DSM 14266 / JCM 13030 / NBRC 101832 / S2 / LL) protein is Lysine--tRNA ligase (lysS).